The following is a 428-amino-acid chain: Chaperone SurA (428 aa).

Positions 1-13 (MLGALLLSGAVHA) are cleaved as a signal peptide. 2 PpiC domains span residues 164–265 (SEEF…KLLE) and 276–375 (RDEV…EVLG).

It is found in the periplasm. It carries out the reaction [protein]-peptidylproline (omega=180) = [protein]-peptidylproline (omega=0). Its function is as follows. Chaperone involved in the correct folding and assembly of outer membrane proteins. Recognizes specific patterns of aromatic residues and the orientation of their side chains, which are found more frequently in integral outer membrane proteins. May act in both early periplasmic and late outer membrane-associated steps of protein maturation. The chain is Chaperone SurA from Pseudomonas savastanoi pv. phaseolicola (strain 1448A / Race 6) (Pseudomonas syringae pv. phaseolicola (strain 1448A / Race 6)).